A 631-amino-acid chain; its full sequence is Eukaryotic translation initiation factor 2-alpha kinase 1 (631 aa).

Residues 1-34 (MQGGNSGVRKREEEGGGEGAVAAPPAIDFPAESS) form a disordered region. The SIFI-degron signature appears at 85-104 (LRSRQVFKLLCQTFIKMGLL). The Protein kinase domain maps to 167-583 (FEEVAILGKG…AVQLLQSELF (417 aa)). ATP is bound by residues 173 to 181 (LGKGGYGRV) and lysine 196. The segment at 260–301 (QEEDREQYDVKNDESSSSSIVFAEPTPEKGKRFGESDTENQN) is disordered. Threonine 285 carries the post-translational modification Phosphothreonine. Residues 285–301 (TPEKGKRFGESDTENQN) are compositionally biased toward basic and acidic residues. One copy of the HRM 1 repeat lies at 410–415 (ACPYVM). Aspartate 442 serves as the catalytic Proton acceptor. Residues threonine 486 and threonine 488 each carry the phosphothreonine; by autocatalysis modification. The residue at position 493 (threonine 493) is a Phosphothreonine. The HRM 2 repeat unit spans residues 552–557 (RCPVQA).

This sequence belongs to the protein kinase superfamily. Ser/Thr protein kinase family. GCN2 subfamily. As to quaternary structure, synthesized in an inactive form that binds to the N-terminal domain of CDC37. Has to be associated with a multiprotein complex containing Hsp90, CDC37 and PPP5C for maturation and activation by autophosphorylation. The phosphatase PPP5C modulates this activation. Homodimer; homodimerizes in presence of heme, forming a disulfide-linked inactive homodimer. Interacts with DELE1; binds both to full-length DELE1 and processed form of DELE1 (S-DELE1) in response to stress, leading to activate its protein kinase activity and trigger the integrated stress response (ISR). In terms of processing, activated by autophosphorylation; phosphorylated predominantly on serine and threonine residues, but also on tyrosine residues. Autophosphorylation at Thr-488 is required for kinase activation. The active autophosphorylated form apparently is largely refractory to cellular heme fluctuations. Ubiquitinated and degraded by the SIFI complex once the mitochondrial stress has been resolved, thereby providing stress response silencing. Within the SIFI complex, UBR4 initiates ubiquitin chain that are further elongated or branched by KCMF1.

It localises to the cytoplasm. It catalyses the reaction L-seryl-[protein] + ATP = O-phospho-L-seryl-[protein] + ADP + H(+). The catalysed reaction is L-threonyl-[protein] + ATP = O-phospho-L-threonyl-[protein] + ADP + H(+). In normal conditions, the protein kinase activity is inhibited; inhibition is relieved by various stress conditions. Inhibited by heme: in presence of heme, forms a disulfide-linked inactive homodimer. Heme depletion relieves inhibition and stimulates kinase activity by autophosphorylation. Inhibited by the heme metabolites biliverdin and bilirubin. Induced by oxidative stress generated by arsenite treatment. Binding of nitric oxide (NO) to the heme iron in the N-terminal heme-binding domain activates the kinase activity, while binding of carbon monoxide (CO) suppresses kinase activity. Protein kinase activity is also activated upon binding to DELE1 in response to various stress, triggering the integrated stress response (ISR): activated by full-length DELE1 in response to iron deficiency, while it is activated by the processed form of DELE1 (S-DELE1) in response to mitochondrial stress. Metabolic-stress sensing protein kinase that phosphorylates the alpha subunit of eukaryotic translation initiation factor 2 (EIF2S1/eIF-2-alpha) in response to various stress conditions. Key activator of the integrated stress response (ISR) required for adaptation to various stress, such as heme deficiency, oxidative stress, osmotic shock, mitochondrial dysfunction and heat shock. EIF2S1/eIF-2-alpha phosphorylation in response to stress converts EIF2S1/eIF-2-alpha in a global protein synthesis inhibitor, leading to a global attenuation of cap-dependent translation, while concomitantly initiating the preferential translation of ISR-specific mRNAs, such as the transcriptional activator ATF4, and hence allowing ATF4-mediated reprogramming. Acts as a key sensor of heme-deficiency: in normal conditions, binds hemin via a cysteine thiolate and histidine nitrogenous coordination, leading to inhibit the protein kinase activity. This binding occurs with moderate affinity, allowing it to sense the heme concentration within the cell: heme depletion relieves inhibition and stimulates kinase activity, activating the ISR. Thanks to this unique heme-sensing capacity, plays a crucial role to shut off protein synthesis during acute heme-deficient conditions. In red blood cells (RBCs), controls hemoglobin synthesis ensuring a coordinated regulation of the synthesis of its heme and globin moieties. It thereby plays an essential protective role for RBC survival in anemias of iron deficiency. Iron deficiency also triggers activation by full-length DELE1. Also activates the ISR in response to mitochondrial dysfunction: HRI/EIF2AK1 protein kinase activity is activated upon binding to the processed form of DELE1 (S-DELE1), thereby promoting the ATF4-mediated reprogramming. Also acts as an activator of mitophagy in response to mitochondrial damage: catalyzes phosphorylation of eIF-2-alpha (EIF2S1) following activation by S-DELE1, thereby promoting mitochondrial localization of EIF2S1, triggering PRKN-independent mitophagy. The chain is Eukaryotic translation initiation factor 2-alpha kinase 1 from Macaca fascicularis (Crab-eating macaque).